We begin with the raw amino-acid sequence, 471 residues long: 5-hydroxytryptamine receptor 2A (471 aa).

Residues 1–80 (MEILCEDNIS…LQEKNWSALL (80 aa)) are Extracellular-facing. Asn-8, Asn-38, Asn-44, Asn-51, and Asn-54 each carry an N-linked (GlcNAc...) asparagine glycan. Residues 81–97 (TTVVIILTIAGNILVIM) form a helical membrane-spanning segment. Residues 98 to 111 (AVSLEKKLQNATNY) lie on the Cytoplasmic side of the membrane. Residues 112–137 (FLMSLAIADMLLGFLVMPVSMLTILY) traverse the membrane as a helical segment. Over 138 to 146 (GYRWPLPSK) the chain is Extracellular. Residues 147 to 171 (LCAIWIYLDVLFSTASIMHLCAISL) form a helical membrane-spanning segment. A disulfide bond links Cys-148 and Cys-227. A serotonin-binding site is contributed by Asp-155. Residues 172-174 (DRY) carry the DRY motif; important for ligand-induced conformation changes motif. Residues 172–191 (DRYVAIQNPIHHSRFNSRTK) are Cytoplasmic-facing. A helical transmembrane segment spans residues 192 to 215 (AFLKIIAVWTISVGISMPIPVFGL). At 216–232 (QDDSKVFKEGSCLLADD) the chain is on the extracellular side. A helical transmembrane segment spans residues 233-258 (NFVLIGSFVAFFIPLTIMVITYFLTI). The Cytoplasmic segment spans residues 259–322 (KSLQKEATLC…QSISNEQKAC (64 aa)). Ser-280 carries the phosphoserine modification. A helical membrane pass occupies residues 323 to 348 (KVLGIVFFLFVVMWCPFFITNIMAVI). Residue Asn-343 coordinates serotonin. A disulfide bridge links Cys-349 with Cys-353. At 349–356 (CKESCNEN) the chain is on the extracellular side. Residues 357–382 (VIGALLNVFVWIGYLSSAVNPLVYTL) traverse the membrane as a helical segment. An NPxxY motif; important for ligand-induced conformation changes and signaling motif is present at residues 376–380 (NPLVY). At 383-471 (FNKTYRSAFS…ETVNEKVSCV (89 aa)) the chain is on the cytoplasmic side. The PDZ-binding signature appears at 469–471 (SCV).

This sequence belongs to the G-protein coupled receptor 1 family. As to quaternary structure, interacts (via C-terminus) with MPDZ and PATJ. May interact (via C-terminus) with MPP3, PRDX6, DLG4, DLG1, CASK, APBA1 and MAGI2. Interacts with GRM2 and DRD2; this may affect signaling. Detected in adult intestine, especially in mucosal epithelium, longitudinal and circular layers of muscularis externa and myenteric plexuses. Highly expressed in Paneth cells, and detected at lower levels in enterocytes (at protein level). Detected in brain cortex.

Its subcellular location is the cell membrane. It localises to the cell projection. The protein resides in the axon. It is found in the cytoplasmic vesicle. The protein localises to the membrane. Its subcellular location is the caveola. It localises to the dendrite. The protein resides in the presynapse. G-protein coupled receptor activity is regulated by lipids: oleamide increases HTR2A-mediated activity. Functionally, G-protein coupled receptor for 5-hydroxytryptamine (serotonin). Also functions as a receptor for various drugs and psychoactive substances, including mescaline, psilocybin, 1-(2,5-dimethoxy-4-iodophenyl)-2-aminopropane (DOI) and lysergic acid diethylamide (LSD). Ligand binding causes a conformation change that triggers signaling via guanine nucleotide-binding proteins (G proteins) and modulates the activity of downstream effectors. HTR2A is coupled to G(q)/G(11) G alpha proteins and activates phospholipase C-beta, releasing diacylglycerol (DAG) and inositol 1,4,5-trisphosphate (IP3) second messengers that modulate the activity of phosphatidylinositol 3-kinase and promote the release of Ca(2+) ions from intracellular stores, respectively. Beta-arrestin family members inhibit signaling via G proteins and mediate activation of alternative signaling pathways. Affects neural activity, perception, cognition and mood. Plays a role in the regulation of behavior, including responses to anxiogenic situations and psychoactive substances. Plays a role in intestinal smooth muscle contraction, and may play a role in arterial vasoconstriction. The protein is 5-hydroxytryptamine receptor 2A (Htr2a) of Rattus norvegicus (Rat).